The chain runs to 526 residues: Fumitremorgin C synthase (526 aa).

A helical membrane pass occupies residues Leu4 to Ile24. Residue Cys443 participates in heme binding.

It belongs to the cytochrome P450 family. Heme serves as cofactor.

Its subcellular location is the membrane. The enzyme catalyses tryprostatin A + reduced [NADPH--hemoprotein reductase] + O2 = fumitremorgin C + oxidized [NADPH--hemoprotein reductase] + 2 H2O + H(+). The protein operates within mycotoxin biosynthesis. Its function is as follows. Cytochrome P450 monooxygenase; part of the gene cluster that mediates the biosynthesis of fumitremorgins, indole alkaloids that carry not only intriguing chemical structures, but also interesting biological and pharmacological activities. The biosynthesis of fumitremorgin-type alkaloids begins by condensation of the two amino acids L-tryptophan and L-proline to brevianamide F, catalyzed by the non-ribosomal peptide synthetase ftmA. Brevianamide F is then prenylated by the prenyltransferase ftmPT1/ftmB in the presence of dimethylallyl diphosphate, resulting in the formation of tryprostatin B. The three cytochrome P450 monooxygenases, ftmP450-1/ftmC, ftmP450-2/ftmE and ftmP450-3/FtmG, are responsible for the conversion of tryprostatin B to 6-hydroxytryprostatin B, tryprostatin A to fumitremorgin C and fumitremorgin C to 12,13-dihydroxyfumitremorgin C, respectively. The putative methyltransferase ftmMT/ftmD is expected for the conversion of 6-hydroxytryprostatin B to tryprostatin A. FtmPT2/FtmH catalyzes the prenylation of 12,13-dihydroxyfumitre-morgin C in the presence of dimethylallyl diphosphate, resulting in the formation of fumitremorgin B. Fumitremorgin B is further converted to verruculogen by ftmOx1/ftmF via the insertion of an endoperoxide bond between the two prenyl moieties. In some fungal species, verruculogen is further converted to fumitremorgin A, but the enzymes involved in this step have not been identified yet. The protein is Fumitremorgin C synthase of Aspergillus fumigatus (Neosartorya fumigata).